Consider the following 212-residue polypeptide: Glutathione S-transferase hmp2 (212 aa).

A GST N-terminal domain is found at 1-80 (MVIKLYGSAM…YLARKYDSGT (80 aa)). Glutathione contacts are provided by residues 51–52 (KV) and 64–65 (ES). Positions 88 to 212 (DHEAYGRFEQ…TWIKATAEAR (125 aa)) constitute a GST C-terminal domain.

This sequence belongs to the GST superfamily.

The enzyme catalyses RX + glutathione = an S-substituted glutathione + a halide anion + H(+). It participates in secondary metabolite biosynthesis. Glutathione S-transferase; part of the gene cluster that mediates the biosynthesis of hypothemycin, a resorcylic acid lactone (RAL) that irreversibly inhibits a subset of protein kinases with a conserved cysteine in the ATP binding site such as human ERK2. The first step is performed by both PKSs hmp3 and hmp8 and leads to the production of 7',8'-dehydrozearalenol (DHZ). The highly reducing PKS hpm8 synthesizes the reduced hexaketide (7S,11S,2E,8E)-7,11-dihydroxy-dodeca-2,8-dienoate, which is transferred downstream to the non-reducing PKS hpm3. Hpm3 then extends the reduced hexaketide to a nonaketide, after which regioselective cyclization and macrolactonization affords DHZ. The next step is the conversion of DHZ into aigialomycin C and is performed by the O-methyltransferase hmp5, the FAD-binding monooxygenase hmp7, and the cytochrome P450 monooxygenase hmp1. The wide substrate tolerance of the hmp5 and hmp7 implies that the reactions from DHZ to aigialomycin C can occur in any order. The steps from aigialomycin C to hypothemycin are less well established. The FAD-linked oxidoreductase hmp9 presumably catalyzes oxidation of the C-6' hydroxyl to a ketone. The timing of this oxidation is important, since the resulting enone functional group is a Michael acceptor that can react spontaneously with glutathione, an abundant metabolite in fungal cells. The glutathione S-transferase hmp2 catalyzes cis-trans isomerization of the 7',8' double bond with equilibrium favoring the trans isomer. The hpm6-encoded transporter might preferentially pump hypothemycin out of the cell relative to the trans isomer aigialomycin A. The cis-to-trans isomerization may be coupled with C-4' hydroxylation, since all known hypothemycin analogs containing the enone functional group also have hydroxyl groups at both C-4' and C-5'. The protein is Glutathione S-transferase hmp2 of Hypomyces subiculosus (Nectria subiculosa).